Here is a 334-residue protein sequence, read N- to C-terminus: Ornithine carbamoyltransferase (334 aa).

Carbamoyl phosphate-binding positions include Ser57 to Thr60, Gln84, Arg108, and His135 to Gln138. L-ornithine-binding positions include Asn169, Asp233, and Ser237–Met238. Residues Cys275–Leu276 and Arg320 each bind carbamoyl phosphate.

The protein belongs to the aspartate/ornithine carbamoyltransferase superfamily. OTCase family.

Its subcellular location is the cytoplasm. The catalysed reaction is carbamoyl phosphate + L-ornithine = L-citrulline + phosphate + H(+). It functions in the pathway amino-acid biosynthesis; L-arginine biosynthesis; L-arginine from L-ornithine and carbamoyl phosphate: step 1/3. In terms of biological role, reversibly catalyzes the transfer of the carbamoyl group from carbamoyl phosphate (CP) to the N(epsilon) atom of ornithine (ORN) to produce L-citrulline. This chain is Ornithine carbamoyltransferase, found in Aeromonas hydrophila subsp. hydrophila (strain ATCC 7966 / DSM 30187 / BCRC 13018 / CCUG 14551 / JCM 1027 / KCTC 2358 / NCIMB 9240 / NCTC 8049).